A 524-amino-acid polypeptide reads, in one-letter code: Metal transporter Nramp2 (524 aa).

Positions 34 to 58 (AYDSDDKVSIAVSDSDSEDGGGGGG) are disordered. 12 helical membrane passes run 70–90 (LWRF…PGNL), 98–118 (AAAG…GALV), 155–175 (LALV…IKIL), 179–199 (TVPL…FLFL), 207–227 (LEAF…IMFG), 253–273 (AVGI…SALV), 295–315 (IESI…TTVF), 341–361 (YGTA…ASGQ), 389–409 (AMIT…FFDT), 420–440 (ALNV…ITLV), 457–477 (VISW…ILSF), and 486–506 (LVRS…VYLI).

It belongs to the NRAMP (TC 2.A.55) family.

The protein resides in the membrane. Probable metal transporter. The chain is Metal transporter Nramp2 (NRAMP2) from Oryza sativa subsp. japonica (Rice).